Here is a 414-residue protein sequence, read N- to C-terminus: Pre-mRNA-processing protein 45 (414 aa).

Disordered stretches follow at residues 128–159 (ESKR…DTPI) and 264–292 (RSKI…KKIK). A compositionally biased stretch (polar residues) spans 135-146 (LQPSRQKNTSSK).

It belongs to the SNW family. Associated with the spliceosome.

It is found in the nucleus. Its function is as follows. Involved in pre-mRNA splicing. The protein is Pre-mRNA-processing protein 45 (PRP45) of Candida glabrata (strain ATCC 2001 / BCRC 20586 / JCM 3761 / NBRC 0622 / NRRL Y-65 / CBS 138) (Yeast).